A 106-amino-acid chain; its full sequence is MMTLRDLINKLLGRETASANTARERLQLVLAHDRVDMSSLTTDLLDKMRKEILDVVAKYVEIDFEEVAVSLETEDRMTALVANLPIKRTLTGEIEFKKNEDTQKKK.

The protein belongs to the MinE family.

Functionally, prevents the cell division inhibition by proteins MinC and MinD at internal division sites while permitting inhibition at polar sites. This ensures cell division at the proper site by restricting the formation of a division septum at the midpoint of the long axis of the cell. This chain is Cell division topological specificity factor, found in Prochlorococcus marinus subsp. pastoris (strain CCMP1986 / NIES-2087 / MED4).